Consider the following 332-residue polypeptide: 5-dehydro-2-deoxygluconokinase (332 aa).

It belongs to the carbohydrate kinase PfkB family.

The catalysed reaction is 5-dehydro-2-deoxy-D-gluconate + ATP = 6-phospho-5-dehydro-2-deoxy-D-gluconate + ADP + H(+). It functions in the pathway polyol metabolism; myo-inositol degradation into acetyl-CoA; acetyl-CoA from myo-inositol: step 5/7. In terms of biological role, catalyzes the phosphorylation of 5-dehydro-2-deoxy-D-gluconate (2-deoxy-5-keto-D-gluconate or DKG) to 6-phospho-5-dehydro-2-deoxy-D-gluconate (DKGP). In Bacillus thuringiensis (strain Al Hakam), this protein is 5-dehydro-2-deoxygluconokinase.